We begin with the raw amino-acid sequence, 544 residues long: Probable protein kinase UbiB (544 aa).

In terms of domain architecture, Protein kinase spans 123 to 505; sequence EFDEQALASA…GRQKSHNVRS (383 aa). ATP contacts are provided by residues 129 to 137 and Lys156; that span reads LASASIAQV. The Proton acceptor role is filled by Asp291. A helical transmembrane segment spans residues 522–540; the sequence is LPLWLSCGTLVTVLLVLLL.

This sequence belongs to the ABC1 family. UbiB subfamily.

It is found in the cell inner membrane. It functions in the pathway cofactor biosynthesis; ubiquinone biosynthesis [regulation]. Functionally, is probably a protein kinase regulator of UbiI activity which is involved in aerobic coenzyme Q (ubiquinone) biosynthesis. In Actinobacillus pleuropneumoniae serotype 7 (strain AP76), this protein is Probable protein kinase UbiB.